The following is a 236-amino-acid chain: (5-formylfuran-3-yl)methyl phosphate synthase (236 aa).

Lys-27 (schiff-base intermediate with substrate) is an active-site residue. Lys-85 (proton acceptor) is an active-site residue.

Belongs to the MfnB family.

The enzyme catalyses 2 D-glyceraldehyde 3-phosphate = 4-(hydroxymethyl)-2-furancarboxaldehyde phosphate + phosphate + 2 H2O. Its pathway is cofactor biosynthesis; methanofuran biosynthesis. Its function is as follows. Catalyzes the formation of 4-(hydroxymethyl)-2-furancarboxaldehyde phosphate (4-HFC-P) from two molecules of glyceraldehyde-3-P (GA-3-P). The sequence is that of (5-formylfuran-3-yl)methyl phosphate synthase from Methanococcus maripaludis (strain C7 / ATCC BAA-1331).